Reading from the N-terminus, the 33-residue chain is Maurocalcin (33 aa).

3 cysteine pairs are disulfide-bonded: Cys-3–Cys-17, Cys-10–Cys-21, and Cys-16–Cys-32. The interval Lys-22–Arg-24 is essential for stimulation of [3H]ryanodine binding to RYR.

Belongs to the scorpion calcin family. The non-natural D-maurocalcin (a chiral analog of maurocalcin composed of D-amino acids) completely loses the ability to stimulate [3H]ryanodine binding and calcium release. Its protease resistance, combined with its efficient cell penetration at concentrations devoid of cell toxicity, suggests that it should be an excellent vector for in vivo applications. In terms of tissue distribution, expressed by the venom gland.

It is found in the secreted. This toxin stabilizes ryanodine receptor 1 (RyR1) opening in a long-lasting subconductance state (48%-60% of the full conductance state). Furthermore, it triggers calcium release from sarcoplasmic vesicles (6.6 nM are enough to induce a sharp release, and 60% of the total calcium is released after toxin (100 nM) addition) probably by acting as a cell-penetrating peptide (CPP). In addition, it has been shown to dose-dependently stimulate ryanodine binding to RyR1 (EC(50)=12.5-26.4 nM). It also augments the bell-shaped calcium-[3H]ryanodine binding curve that is maximal at about 10 uM calcium concentration. It binds a different site as ryanodine. It acts synergistically with caffeine. In vivo, intracerebroventricular injection into mice causes death. This chain is Maurocalcin, found in Scorpio palmatus (Israeli golden scorpion).